The sequence spans 130 residues: Capsid protein (130 aa).

Residues glutamate 32–isoleucine 105 are viral RNA-binding.

It belongs to the Leviviricetes capsid protein family. As to quaternary structure, homodimer. The capsid proteins form dimers that assemble by group of 5. Twelve such pentamers are linked together with free dimers. The homodimers binds to the viral RNA via an operator hairpin, but also to many other RNA sequences in the viral genome; this interaction probably shifts the virus from the replicative to the assembly phase and ensures specific encapsidation of the viral genome.

The protein localises to the virion. Its function is as follows. Capsid protein self-assembles to form an icosahedral capsid with a T=3 symmetry, about 26 nm in diameter, and consisting of 89 capsid proteins dimers (178 capsid proteins). Involved in viral genome encapsidation through the interaction between a capsid protein dimer and the multiple packaging signals present in the RNA genome. The capsid also contains 1 copy of the A2 maturation protein. Functionally, acts as a translational repressor of viral replicase synthesis late in infection. This latter function is the result of capsid protein interaction with an RNA hairpin which contains the replicase ribosome-binding site. The chain is Capsid protein from Escherichia coli (Bacteriophage MS2).